We begin with the raw amino-acid sequence, 55 residues long: A-type ATP synthase subunit G (55 aa).

As to quaternary structure, has multiple subunits, A(3), B(3), C, D, E, F, G, I and K(x); there may be a few other subunits as well.

It localises to the cell membrane. Its function is as follows. Component of the A-type ATP synthase that produces ATP from ADP in the presence of a proton gradient across the membrane. The protein is A-type ATP synthase subunit G (atpG) of Methanosarcina mazei (strain ATCC BAA-159 / DSM 3647 / Goe1 / Go1 / JCM 11833 / OCM 88) (Methanosarcina frisia).